Here is a 413-residue protein sequence, read N- to C-terminus: Multifunctional CCA protein (413 aa).

Gly-8 and Arg-11 together coordinate ATP. Gly-8 and Arg-11 together coordinate CTP. Mg(2+)-binding residues include Asp-21 and Asp-23. Arg-91, Arg-143, and Arg-146 together coordinate ATP. CTP-binding residues include Arg-91, Arg-143, and Arg-146. The HD domain maps to 232–333; sequence TGVHVMMVID…VRLLERADAL (102 aa).

This sequence belongs to the tRNA nucleotidyltransferase/poly(A) polymerase family. Bacterial CCA-adding enzyme type 1 subfamily. As to quaternary structure, monomer. Can also form homodimers and oligomers. It depends on Mg(2+) as a cofactor. The cofactor is Ni(2+).

It catalyses the reaction a tRNA precursor + 2 CTP + ATP = a tRNA with a 3' CCA end + 3 diphosphate. The enzyme catalyses a tRNA with a 3' CCA end + 2 CTP + ATP = a tRNA with a 3' CCACCA end + 3 diphosphate. Catalyzes the addition and repair of the essential 3'-terminal CCA sequence in tRNAs without using a nucleic acid template. Adds these three nucleotides in the order of C, C, and A to the tRNA nucleotide-73, using CTP and ATP as substrates and producing inorganic pyrophosphate. tRNA 3'-terminal CCA addition is required both for tRNA processing and repair. Also involved in tRNA surveillance by mediating tandem CCA addition to generate a CCACCA at the 3' terminus of unstable tRNAs. While stable tRNAs receive only 3'-terminal CCA, unstable tRNAs are marked with CCACCA and rapidly degraded. In Burkholderia pseudomallei (strain 668), this protein is Multifunctional CCA protein.